The following is a 250-amino-acid chain: 2,3-bisphosphoglycerate-dependent phosphoglycerate mutase (250 aa).

Substrate is bound by residues 10 to 17, 23 to 24, Arg-62, 89 to 92, Lys-100, 116 to 117, and 185 to 186; these read RHGESQWN, TG, ERHY, RR, and GN. His-11 acts as the Tele-phosphohistidine intermediate in catalysis. The active-site Proton donor/acceptor is Glu-89.

The protein belongs to the phosphoglycerate mutase family. BPG-dependent PGAM subfamily. Homodimer.

The enzyme catalyses (2R)-2-phosphoglycerate = (2R)-3-phosphoglycerate. The protein operates within carbohydrate degradation; glycolysis; pyruvate from D-glyceraldehyde 3-phosphate: step 3/5. Functionally, catalyzes the interconversion of 2-phosphoglycerate and 3-phosphoglycerate. The protein is 2,3-bisphosphoglycerate-dependent phosphoglycerate mutase of Klebsiella pneumoniae (strain 342).